The chain runs to 536 residues: MEVIELSLPATNRLATEYIEGTFPVHEAFHPCSFKERLHELHKRTYARDALVHHLLAYHKQFQASEETMANIEKLRHRESVVVIGGQQAGLLTGPLYTIYKIISIITLAKQQEQQLRVPVVPVFWMASEDHDMAEINYVHVAQRGKVKKYVYSPLAKEKRMAAHIELDADALKQWIDDIFKTFGETNVTNELRTYIYECMATSKTVADFFATIVLKLFAKEGIVIVDAAHPHLRAIEREWFMTLAHEHEAITTALQTQQRHLAQLGYEQAIDVSPMCAHLFYDDGQRRLLYYDDAQHCFYTKDGVYRFTPNELRQRIESEPQSFSNNVVTRPLMQEWLFPTLAFIAGPGEIAYWAELKRVFEHFHWHMPPIVPRLSLTLVERHIAADLADVHMTVAEALTNGTKQALEEWMRNNQPVAFDETFHEAKKQMAYIHEQLRQLGMQVDPHLEGIMLKNAERVETQIDYLQQLITRRMLQKHDVHVRKYERIELSLRPNNMPQERVWNVLYYMNRYGLDFVDRLLHVDYRWNGMHKIVYL.

Belongs to the BshC family.

Its function is as follows. Involved in bacillithiol (BSH) biosynthesis. May catalyze the last step of the pathway, the addition of cysteine to glucosamine malate (GlcN-Mal) to generate BSH. This is Putative cysteine ligase BshC from Anoxybacillus flavithermus (strain DSM 21510 / WK1).